A 559-amino-acid polypeptide reads, in one-letter code: (R)-mandelonitrile lyase 1 (559 aa).

Residues 1–27 form the signal peptide; the sequence is MEKSTMSVILFVLHLLVLHLQYSEVHS. N-linked (GlcNAc...) asparagine glycosylation is found at N30 and N44. FAD-binding positions include 63-64, 82-83, T133, and 137-140; these read TS, ER, and NAGV. N-linked (GlcNAc...) asparagine glycosylation is found at N145, N162, N178, and N218. An FAD-binding site is contributed by V244. N-linked (GlcNAc...) asparagine glycans are attached at residues N252, N255, N309, N380, N402, N420, and N467. An intrachain disulfide couples C427 to C478. A substrate-binding site is contributed by Y485. 486-487 is an FAD binding site; sequence WH. The active-site Proton donor is the H487. H525 functions as the Proton acceptor in the catalytic mechanism. Residue 526-527 participates in FAD binding; the sequence is PQ.

Belongs to the GMC oxidoreductase family. As to quaternary structure, monomer. The cofactor is FAD.

It catalyses the reaction (R)-mandelonitrile = benzaldehyde + hydrogen cyanide. Functionally, involved in cyanogenesis, the release of HCN from injured tissues. Catalyzes the stereospecific addition of HCN to a variety of aldehydes in vitro. It is a major seed constituent, and could have the additional role of a storage form for reduced nitrogen. This Prunus dulcis (Almond) protein is (R)-mandelonitrile lyase 1 (MDL1).